The following is a 732-amino-acid chain: TIR domain-containing adapter molecule 1 (732 aa).

Residues 1–153 (MDNPGPSLRG…CSSDIKGDPS (153 aa)) form a TRIF-NTD region. A TRAF6-binding motif is present at residues 84-91 (EGPEEPPD). The interval 144 to 191 (CSSDIKGDPSGFQPLHSHQGSLQPPSASPAVTRSQPRPIDTPDWSWGH) is disordered. Residues 159–178 (HSHQGSLQPPSASPAVTRSQ) show a composition bias toward polar residues. Residues 206–209 (LEIS) carry the pLxIS motif motif. S209 carries the phosphoserine modification. K228 is covalently cross-linked (Glycyl lysine isopeptide (Lys-Gly) (interchain with G-Cter in ubiquitin)). Short sequence motifs (TRAF6-binding) lie at residues 247–254 (QEPEEISW) and 296–306 (HCPIECTELST). The span at 305–331 (STNSRSPLTSTTESVGKQWPITSQRSP) shows a compositional bias: polar residues. The tract at residues 305 to 389 (STNSRSPLTS…TSTSPVLDHS (85 aa)) is disordered. Residues 345–359 (SSSPPAQPPSLQASP) are compositionally biased toward low complexity. A TIR domain is found at 395-534 (KFYNFVVIHA…KVANTFKTQK (140 aa)). The sufficient to induce apoptosis stretch occupies residues 514–713 (WLDEHSPIFA…SSDDKTECSE (200 aa)). 2 disordered regions span residues 603–679 (TPSW…GPQP) and 696–732 (MWGH…ETPE). Composition is skewed to pro residues over residues 604-615 (PSWPGCPQPIPS) and 625-657 (PYSP…PPVS). Residues 658-671 (SPQSQSFPSASSPA) are compositionally biased toward low complexity.

As to quaternary structure, homodimer. Found in a multi-helicase-TICAM1 complex at least composed of DHX36, DDX1, DDX21 and TICAM1; this complex exists in resting cells with or without poly(I:C) RNA ligand stimulation. Interacts (via TIR domain) with DDX21 (via C-terminus). Interacts (via TIR domain) with DHX36 (via C-terminus). Interacts with AZI2 and IRF7. Interacts (when phosphorylated) with IRF3; following activation and phosphorylation on the pLxIS motif by TBK1, recruits IRF3. Interacts with TICAM2 in TLR4 recruitment. Interaction with PIAS4 inhibits the TICAM1-induced NF-kappa-B, IRF and IFNB1 activation. Interacts with IKBKB and IKBKE. Interaction with SARM1 blocks TICAM1-dependent transcription factor activation. Interacts with TRAF3. Interacts with TRAFD1. Interacts with UBQLN1 (via UBA domain). Interacts with TBK1, TRAF6 and RIPK1 and these interactions are enhanced in the presence of WDFY1. Interacts (via the TIR domain) with TLR3 in response to poly(I:C) and this interaction is enhanced in the presence of WDFY1. Interacts with TLR4 in response to poly(I:C) in a WDFY1-dependent manner. Interacts with WDFY1 in response to poly(I:C). Interacts with TRIM56. Interacts (via the TIR domain) with TLR5. Interacts with TRIM8. Interacts with TAX1BP1 and TRIM32; these interactions target TICAM1 to TAX1BP1-mediated selective autophagic degradation. Interacts with DDX50. Post-translationally, phosphorylated by TBK1. Following activation, phosphorylated by TBK1 at Ser-209 in the pLxIS motif. The phosphorylated pLxIS motif constitutes an IRF3-binding motif, leading to recruitment of the transcription factor IRF3 to induce type-I interferons and other cytokines. In terms of processing, polyubiquitinated at Lys-228 by TRIM38 with 'Lys-48'-linked chains, leading to proteasomal degradation. Polyubiquitinated with 'Lys-6'- and 'Lys-33'-linked chains in a TRIM8-dependent manner; ubiquitination disrupts the interaction with TBK1 and subsequent interferon production.

The protein localises to the cytoplasm. The protein resides in the cytosol. Its subcellular location is the cytoplasmic vesicle. It localises to the autophagosome. It is found in the mitochondrion. Functionally, involved in innate immunity against invading pathogens. Adapter used by TLR3, TLR4 (through TICAM2) and TLR5 to mediate NF-kappa-B and interferon-regulatory factor (IRF) activation, and to induce apoptosis. Ligand binding to these receptors results in TRIF recruitment through its TIR domain. Distinct protein-interaction motifs allow recruitment of the effector proteins TBK1, TRAF6 and RIPK1, which in turn, lead to the activation of transcription factors IRF3 and IRF7, NF-kappa-B and FADD respectively. Phosphorylation by TBK1 on the pLxIS motif leads to recruitment and subsequent activation of the transcription factor IRF3 to induce expression of type I interferon and exert a potent immunity against invading pathogens. Component of a multi-helicase-TICAM1 complex that acts as a cytoplasmic sensor of viral double-stranded RNA (dsRNA) and plays a role in the activation of a cascade of antiviral responses including the induction of pro-inflammatory cytokines. The polypeptide is TIR domain-containing adapter molecule 1 (Ticam1) (Mus musculus (Mouse)).